We begin with the raw amino-acid sequence, 327 residues long: Urease accessory protein UreD (327 aa).

The protein belongs to the UreD family. UreD, UreF and UreG form a complex that acts as a GTP-hydrolysis-dependent molecular chaperone, activating the urease apoprotein by helping to assemble the nickel containing metallocenter of UreC. The UreE protein probably delivers the nickel.

The protein resides in the cytoplasm. In terms of biological role, required for maturation of urease via the functional incorporation of the urease nickel metallocenter. This chain is Urease accessory protein UreD, found in Yersinia enterocolitica serotype O:8 / biotype 1B (strain NCTC 13174 / 8081).